Reading from the N-terminus, the 396-residue chain is MTMSMYSTTDKMKMSAPSCFPGRYSPSYRSSEQMRRCMPNPSIHISSSCDSLESRLLEDASLLCNSWSARQNGDIFAGINDGILSRAEALAAVDIQKHQAQHVHSQMPSQIKHDVMYHHHSMSGPPQRPLQENPFSRQMHHSMDQLDMLDPTGSMTTLAPISESPLTPTHQHLHGSYHSMNHMMSHHHPGTLSGHTGGHHGHSAVHHPVITAAVAAAGLHPDTDTDPRELEAFAERFKQRRIKLGVTQADVGKALANLKLPGVGALSQSTICRFESLTLSHNNMIALKPILQAWLEEAEAQAKNKRRDPDAPSVLPAGEKKRKRTSIAAPEKRSLEAYFAVQPRPSGEKIAAIAEKLDLKKNVVRVWFCNQRQKQKRIVSSVTPSMTGHGSAGFGY.

The POU-IV box signature appears at 86 to 95 (RAEALAAVDI). The POU-specific domain maps to 222 to 299 (DTDTDPRELE…ILQAWLEEAE (78 aa)). Positions 302–328 (AKNKRRDPDAPSVLPAGEKKRKRTSIA) are disordered. Residues 320–377 (KKRKRTSIAAPEKRSLEAYFAVQPRPSGEKIAAIAEKLDLKKNVVRVWFCNQRQKQKR) constitute a DNA-binding region (homeobox; atypical).

This sequence belongs to the POU transcription factor family. Class-4 subfamily. As to expression, coexpressed with vvl in overlapping subsets of neurons in the embryonic central nervous system. Expressed in olfactory neurons.

It is found in the nucleus. Its function is as follows. Modulates gene transcription; simultaneously generates both a specific activator and an inhibitor of gene transcription, capable of modulating two distinct regulatory programs during neural development. Has a role in olfactory behavior. The sequence is that of Inhibitory POU protein (acj6) from Drosophila melanogaster (Fruit fly).